The sequence spans 184 residues: Dirigent protein 13 (184 aa).

A signal peptide spans 1–25 (MANQIYIISLIFLSVLLYQSTTVLS). A disulfide bridge links Cys36 with Cys182. N-linked (GlcNAc...) asparagine glycans are attached at residues Asn55 and Asn119.

Belongs to the plant dirigent protein family. Homodimer. As to expression, expressed in root vasculature and meristems, cotyledons, flowers, siliques, and leaf trichomes. Localized in the interfascicular/vascular cambia and developing xylem.

It is found in the secreted. The protein localises to the extracellular space. Its subcellular location is the apoplast. Functionally, dirigent proteins impart stereoselectivity on the phenoxy radical-coupling reaction, yielding optically active lignans from two molecules of coniferyl alcohol in the biosynthesis of lignans, flavonolignans, and alkaloids and thus plays a central role in plant secondary metabolism. In Arabidopsis thaliana (Mouse-ear cress), this protein is Dirigent protein 13 (DIR13).